The primary structure comprises 721 residues: Ophiobolin F synthase oblA (721 aa).

The (7Z)-ophiobola-7,19-dien-3-ol synthase stretch occupies residues 5–325 (YDQPYSVLLD…RYNLKAEWNE (321 aa)). Residues D97 and D101 each contribute to the Mg(2+) site. D97 is a substrate binding site. Residues 97-101 (DDVID) carry the DDXXD 1 motif. Residues 185-188 (RSLD), N229, 233-237 (SFEKE), and 316-317 (RY) each bind substrate. Positions 229 to 237 (NDLFSFEKE) match the NSE/DTE motif. The geranylfarnesyl diphosphate synthase stretch occupies residues 326-721 (LQMLRAKHGV…LRLMMEMLKV (396 aa)). The disordered stretch occupies residues 348 to 387 (SMDHIWKKGSTQGESKGEKRKRQSVNGTNGVNGTNGVKKP). The segment covering 372 to 384 (VNGTNGVNGTNGV) has biased composition (low complexity). Positions 432, 435, and 464 each coordinate isopentenyl diphosphate. Positions 471 and 475 each coordinate Mg(2+). The DDXXD 2 signature appears at 471-475 (DDLED). A dimethylallyl diphosphate-binding site is contributed by R480. An isopentenyl diphosphate-binding site is contributed by R481. Positions 558, 559, 597, 604, 614, and 624 each coordinate dimethylallyl diphosphate.

The protein in the N-terminal section; belongs to the terpene synthase family. It in the C-terminal section; belongs to the FPP/GGPP synthase family. Mg(2+) is required as a cofactor.

The enzyme catalyses isopentenyl diphosphate + (2E,6E)-farnesyl diphosphate = (2E,6E,10E)-geranylgeranyl diphosphate + diphosphate. It carries out the reaction isopentenyl diphosphate + (2E,6E,10E)-geranylgeranyl diphosphate = (2E,6E,10E,14E)-geranylfarnesyl diphosphate + diphosphate. It catalyses the reaction (2E,6E,10E,14E)-geranylfarnesyl diphosphate + H2O = ophiobolin F + diphosphate. The protein operates within secondary metabolite biosynthesis; terpenoid biosynthesis. Functionally, bifunctional sesterterpene synthase; part of the gene cluster that mediates the biosynthesis of the sesterterpenes ophiobolins, fungal phytotoxins with potential anti-cancer activities. The first step of the pathway is performed by the sesterterpene synthase oblA that possesses both prenyl transferase and terpene cyclase activity, converting isopentenyl diphosphate and dimethylallyl diphosphate into geranylfarnesyl diphosphate (GFPP) and further converting GFPP into ophiobolin F, respectively. Other sesterterpenoids (C(25) terpenoids) are found as minor products of oblA. The cytochrome P450 monooxygenase oblB then catalyzes a four-step oxidative transformation of ophiobolin F to yield ophiobolin C. The FAD-dependent oxidoreductase oblC might be involved in a later oxidation step that produces ophiobolin A. This Cochliobolus heterostrophus (strain C5 / ATCC 48332 / race O) (Southern corn leaf blight fungus) protein is Ophiobolin F synthase oblA.